A 138-amino-acid chain; its full sequence is Regulator of ribonuclease activity B (138 aa).

The segment at 111–138 (WGTYFEDPNGEEGDDDDYVDEDDDGVRH) is disordered. Acidic residues predominate over residues 118 to 138 (PNGEEGDDDDYVDEDDDGVRH).

Belongs to the RraB family. As to quaternary structure, interacts with the C-terminal region of Rne.

The protein localises to the cytoplasm. Globally modulates RNA abundance by binding to RNase E (Rne) and regulating its endonucleolytic activity. Can modulate Rne action in a substrate-dependent manner by altering the composition of the degradosome. This chain is Regulator of ribonuclease activity B, found in Salmonella typhi.